Consider the following 322-residue polypeptide: NADH-cytochrome b5 reductase 2 (322 aa).

A helical transmembrane segment spans residues 31–48; the sequence is LAPIYAAVGITGVGVGLY. Residues 72–176 form the FAD-binding FR-type domain; the sequence is QGWFDLKLSE…KGPIVKYPWE (105 aa). 179 to 214 lines the FAD pocket; sequence KHNHICLIAGGTGITPMYQLAREIFKNPEDQTKVTL.

It belongs to the flavoprotein pyridine nucleotide cytochrome reductase family. FAD serves as cofactor.

The protein localises to the mitochondrion outer membrane. It carries out the reaction 2 Fe(III)-[cytochrome b5] + NADH = 2 Fe(II)-[cytochrome b5] + NAD(+) + H(+). May mediate the reduction of outer membrane cytochrome b5. This chain is NADH-cytochrome b5 reductase 2 (mcr1), found in Aspergillus niger (strain ATCC MYA-4892 / CBS 513.88 / FGSC A1513).